The chain runs to 323 residues: Protein translocase subunit SecF (323 aa).

6 helical membrane-spanning segments follow: residues 19–39 (GVIV…FKGF), 138–158 (ILSL…RYEW), 162–182 (LASV…VIVF), 189–209 (EVIA…IIIF), 244–264 (LTVF…IIGF), and 269–289 (LIGT…VALL).

The protein belongs to the SecD/SecF family. SecF subfamily. In terms of assembly, forms a complex with SecD. Part of the essential Sec protein translocation apparatus which comprises SecA, SecYEG and auxiliary proteins SecDF-YajC and YidC.

Its subcellular location is the cell inner membrane. Part of the Sec protein translocase complex. Interacts with the SecYEG preprotein conducting channel. SecDF uses the proton motive force (PMF) to complete protein translocation after the ATP-dependent function of SecA. This Helicobacter pylori (strain J99 / ATCC 700824) (Campylobacter pylori J99) protein is Protein translocase subunit SecF.